Reading from the N-terminus, the 537-residue chain is CTP synthase (537 aa).

The tract at residues Met-1–Leu-267 is amidoligase domain. Ser-13 is a binding site for CTP. Ser-13 provides a ligand contact to UTP. An ATP-binding site is contributed by Ser-14–Ile-19. Position 54 (Tyr-54) interacts with L-glutamine. Asp-71 is an ATP binding site. Residues Asp-71 and Glu-141 each contribute to the Mg(2+) site. Residues Asp-148–Glu-150, Lys-188–Gln-193, and Lys-224 contribute to the CTP site. UTP is bound by residues Lys-188–Gln-193 and Lys-224. Arg-240 to Val-242 contributes to the ATP binding site. Residues Glu-292 to Asn-534 form the Glutamine amidotransferase type-1 domain. Position 354 (Gly-354) interacts with L-glutamine. The active-site Nucleophile; for glutamine hydrolysis is Cys-381. L-glutamine-binding positions include Leu-382 to Gln-385, Glu-405, and Arg-462. Catalysis depends on residues His-507 and Glu-509.

Belongs to the CTP synthase family. In terms of assembly, homotetramer.

It catalyses the reaction UTP + L-glutamine + ATP + H2O = CTP + L-glutamate + ADP + phosphate + 2 H(+). The catalysed reaction is L-glutamine + H2O = L-glutamate + NH4(+). The enzyme catalyses UTP + NH4(+) + ATP = CTP + ADP + phosphate + 2 H(+). It participates in pyrimidine metabolism; CTP biosynthesis via de novo pathway; CTP from UDP: step 2/2. With respect to regulation, allosterically activated by GTP, when glutamine is the substrate; GTP has no effect on the reaction when ammonia is the substrate. The allosteric effector GTP functions by stabilizing the protein conformation that binds the tetrahedral intermediate(s) formed during glutamine hydrolysis. Inhibited by the product CTP, via allosteric rather than competitive inhibition. Catalyzes the ATP-dependent amination of UTP to CTP with either L-glutamine or ammonia as the source of nitrogen. Regulates intracellular CTP levels through interactions with the four ribonucleotide triphosphates. This chain is CTP synthase, found in Caldanaerobacter subterraneus subsp. tengcongensis (strain DSM 15242 / JCM 11007 / NBRC 100824 / MB4) (Thermoanaerobacter tengcongensis).